A 438-amino-acid chain; its full sequence is Xylose isomerase (438 aa).

Active-site residues include histidine 103 and aspartate 106. The Mg(2+) site is built by glutamate 234, glutamate 270, histidine 273, aspartate 298, aspartate 309, aspartate 311, and aspartate 341.

It belongs to the xylose isomerase family. Homotetramer. It depends on Mg(2+) as a cofactor.

The protein localises to the cytoplasm. The catalysed reaction is alpha-D-xylose = alpha-D-xylulofuranose. The protein is Xylose isomerase of Phocaeicola vulgatus (strain ATCC 8482 / DSM 1447 / JCM 5826 / CCUG 4940 / NBRC 14291 / NCTC 11154) (Bacteroides vulgatus).